The following is a 273-amino-acid chain: Large ribosomal subunit protein uL2 (273 aa).

The tract at residues 228–273 (VDHPHGGGEGKTSGGRHPVTPWGFPTKGKKTRKNKRTSKFIVKKRK) is disordered. Positions 254 to 273 (KGKKTRKNKRTSKFIVKKRK) are enriched in basic residues.

The protein belongs to the universal ribosomal protein uL2 family. In terms of assembly, part of the 50S ribosomal subunit. Forms a bridge to the 30S subunit in the 70S ribosome.

In terms of biological role, one of the primary rRNA binding proteins. Required for association of the 30S and 50S subunits to form the 70S ribosome, for tRNA binding and peptide bond formation. It has been suggested to have peptidyltransferase activity; this is somewhat controversial. Makes several contacts with the 16S rRNA in the 70S ribosome. This is Large ribosomal subunit protein uL2 from Rickettsia rickettsii (strain Iowa).